A 64-amino-acid polypeptide reads, in one-letter code: MKVQELREKNLSELGKELLSLRRAQFGLRLQHRTQQLANVSQINKVRKDIARLKTIIREKTGQL.

It belongs to the universal ribosomal protein uL29 family.

In Nitrosomonas europaea (strain ATCC 19718 / CIP 103999 / KCTC 2705 / NBRC 14298), this protein is Large ribosomal subunit protein uL29.